The primary structure comprises 236 residues: MYLFYQLILEIFQIMSCQNYQSYGCGTYPCVTYGNCYTTCASPCLPYPTNCVQVCTSSQPCPSPCPIPVPCPVTIVEYITTAPTATTIESSPTGMALTPIPVGSTSIPSGTVTVITGYAATPVRSIGGITLNSALGQFTVPLAGSYLITGYIGFSYNAVGIREVYVYKVDGATSVITLISTDSRNTTATNPTYISYSAMDYFNAGDRIFIAAAQNSGSTITTTADNRIAITRMNRQ.

Its subcellular location is the virion. This is an uncharacterized protein from Acanthamoeba polyphaga (Amoeba).